We begin with the raw amino-acid sequence, 398 residues long: Mitogen-activated protein kinase 1 (398 aa).

Residues 1–26 (MDAGAQPPDTEMAEAGGGQQPPAAAA) are disordered. One can recognise a Protein kinase domain in the interval 67-352 (KPPILPIGKG…VEGALAHPYL (286 aa)). ATP is bound by residues 73 to 81 (IGKGAYGIV) and lysine 96. The active-site Proton acceptor is aspartate 193. Threonine 225 is subject to Phosphothreonine. The TXY motif lies at 225–227 (TEY). Tyrosine 227 bears the Phosphotyrosine mark.

This sequence belongs to the protein kinase superfamily. CMGC Ser/Thr protein kinase family. MAP kinase subfamily. As to quaternary structure, may interact with RAC1. In terms of processing, dually phosphorylated on Thr-225 and Tyr-227, which activates the enzyme.

It catalyses the reaction L-seryl-[protein] + ATP = O-phospho-L-seryl-[protein] + ADP + H(+). The catalysed reaction is L-threonyl-[protein] + ATP = O-phospho-L-threonyl-[protein] + ADP + H(+). Activated by threonine and tyrosine phosphorylation. Activated in response to sphingolipid elicitor (SE). Involved in sphingolipid elicitor (SE)-dependent defense signaling pathway. Acts downstream of heterotrimeric G protein alpha subunit and small GTPase RAC1. May regulate the expression of various genes involved in biotic and abiotic stress response. Involved in an abscisic acid signaling pathway that regulates the activities of antioxidant enzymes and the production of hydrogen peroxide. Acts downstream of CCAMK. This Oryza sativa subsp. japonica (Rice) protein is Mitogen-activated protein kinase 1 (MPK1).